The following is a 546-amino-acid chain: Probable protein kinase UbiB (546 aa).

Positions 124–502 constitute a Protein kinase domain; the sequence is DFDIKPLASA…RVRQGQSRYL (379 aa). ATP is bound by residues 130–138 and K153; that span reads LASASIAQV. Residue D288 is the Proton acceptor of the active site. Transmembrane regions (helical) follow at residues 501-521 and 522-542; these read YLFG…INRP and DWQM…LIGW.

The protein belongs to the ABC1 family. UbiB subfamily.

Its subcellular location is the cell inner membrane. It participates in cofactor biosynthesis; ubiquinone biosynthesis [regulation]. In terms of biological role, is probably a protein kinase regulator of UbiI activity which is involved in aerobic coenzyme Q (ubiquinone) biosynthesis. The chain is Probable protein kinase UbiB from Enterobacter sp. (strain 638).